The primary structure comprises 383 residues: Na(+)/H(+) antiporter NhaA (383 aa).

11 helical membrane passes run 19 to 39 (AGGV…NSPL), 56 to 76 (VLHG…GLEI), 92 to 112 (ILPG…FLAL), 122 to 142 (GWAV…ALLG), 151 to 171 (IFLT…IALF), 174 to 194 (AKLS…LAAL), 212 to 232 (LWGA…ALAL), 255 to 275 (VGYG…FAGL), 292 to 312 (LLFG…WLGF), 326 to 346 (GVAV…ALAF), and 356 to 376 (VKVG…LVLL).

This sequence belongs to the NhaA Na(+)/H(+) (TC 2.A.33) antiporter family.

It is found in the cell inner membrane. It catalyses the reaction Na(+)(in) + 2 H(+)(out) = Na(+)(out) + 2 H(+)(in). In terms of biological role, na(+)/H(+) antiporter that extrudes sodium in exchange for external protons. This Paramagnetospirillum magneticum (strain ATCC 700264 / AMB-1) (Magnetospirillum magneticum) protein is Na(+)/H(+) antiporter NhaA.